We begin with the raw amino-acid sequence, 426 residues long: Fc receptor-like B (426 aa).

Residues 1–17 form the signal peptide; it reads MWPLTALLLLVPSSGQA. Ig-like C2-type domains lie at 23 to 101 and 103 to 189; these read PILS…LSVS and DWLI…VAVT. 2 disulfides stabilise this stretch: cysteine 44–cysteine 85 and cysteine 124–cysteine 168. N-linked (GlcNAc...) asparagine glycosylation is present at asparagine 152. The tract at residues 400 to 426 is disordered; sequence ELRGTPETPTSHFAVSPGTPETTPVES. The span at 406-426 shows a compositional bias: polar residues; the sequence is ETPTSHFAVSPGTPETTPVES.

Expressed at low levels. Expressed in B-lymphocytes. Detected in tonsil, lung, kidney, spleen and placenta. Expressed by a small subset of germinal center B-cells in tonsils and by melanocytes (at protein level).

It localises to the cytoplasm. It is found in the endoplasmic reticulum. The sequence is that of Fc receptor-like B (FCRLB) from Homo sapiens (Human).